The chain runs to 575 residues: Cytokinin dehydrogenase 1 (575 aa).

The signal sequence occupies residues 1-31 (MGLTSSLRFHRQNNKTFLGIFMILVLSCIPG). N14, N38, and N115 each carry an N-linked (GlcNAc...) asparagine glycan. One can recognise an FAD-binding PCMH-type domain in the interval 84 to 262 (YQLPPLAILH…TRARISLEPA (179 aa)). The FAD site is built by A120, G122, and G124. H125 bears the Pros-8alpha-FAD histidine mark. FAD is bound by residues S126, Q130, D186, T191, S197, I201, and I252. N-linked (GlcNAc...) asparagine glycosylation is found at N303, N318, N437, and N467. FAD contacts are provided by Y498 and Q536.

It belongs to the oxygen-dependent FAD-linked oxidoreductase family. Requires FAD as cofactor. As to expression, expressed in shoot apexes, lateral shoot meristems, growing tissues of young flowers, and weakly at the root-hypocotyl junction.

Its subcellular location is the vacuole. It carries out the reaction N(6)-dimethylallyladenine + A + H2O = 3-methyl-2-butenal + adenine + AH2. Catalyzes the oxidation of cytokinins, a family of N(6)-substituted adenine derivatives that are plant hormones, where the substituent is an isopentenyl group. Catalyzes in vitro the oxidation of various types of cytokinin nucleotides that are known as direct products of cytokinin biosynthesis. Promotes adventitious root initiation downstream of MYC2-dependent jasmonate signaling. Cytokinin degraded by CKX1 is required for cell division in the female gametophyte by modulating the expression of cell cycle genes. This chain is Cytokinin dehydrogenase 1 (CKX1), found in Arabidopsis thaliana (Mouse-ear cress).